Consider the following 230-residue polypeptide: MVKRSKKYREAAERVDRNNLYTANEAIALLKSMPSYNFDQTVEAVFRLSVDPRKADQLVRGTVNLPHGTGKTAKVLVFARGPKATEATEAGADIVGDDDLIAKVQGGFLDFDAVVATPDMMGKVGRLGRVLGPRGLMPNPKTGTVTMDVTKAVKDIKGGKIEFRVDKNGNLSFLIGKMSFDESALDENFKAVADEVKRLKPSTVKGRYLTKATITSTMNPGVPVDPNTLA.

This sequence belongs to the universal ribosomal protein uL1 family. Part of the 50S ribosomal subunit.

Its function is as follows. Binds directly to 23S rRNA. The L1 stalk is quite mobile in the ribosome, and is involved in E site tRNA release. In terms of biological role, protein L1 is also a translational repressor protein, it controls the translation of the L11 operon by binding to its mRNA. The chain is Large ribosomal subunit protein uL1 from Bifidobacterium longum (strain DJO10A).